The sequence spans 322 residues: Tropinone reductase homolog At2g29260, chloroplastic (322 aa).

A chloroplast-targeting transit peptide spans 1–61; the sequence is MVLDMASHLY…YASQSSIAIT (61 aa). 74–98 is a binding site for NADP(+); sequence LVTGGTRGIGRAIVEELAGLGAEVH. Ser207 contributes to the substrate binding site.

The protein belongs to the short-chain dehydrogenases/reductases (SDR) family. SDR65C subfamily.

The protein localises to the plastid. The protein resides in the chloroplast. The protein is Tropinone reductase homolog At2g29260, chloroplastic of Arabidopsis thaliana (Mouse-ear cress).